Here is a 164-residue protein sequence, read N- to C-terminus: Deoxyuridine 5'-triphosphate nucleotidohydrolase (164 aa).

Residues 66-68 (RSG), Asn-79, 83-85 (TVD), and Lys-93 each bind substrate.

It belongs to the dUTPase family. Mg(2+) is required as a cofactor.

The catalysed reaction is dUTP + H2O = dUMP + diphosphate + H(+). The protein operates within pyrimidine metabolism; dUMP biosynthesis; dUMP from dCTP (dUTP route): step 2/2. Functionally, this enzyme is involved in nucleotide metabolism: it produces dUMP, the immediate precursor of thymidine nucleotides and it decreases the intracellular concentration of dUTP so that uracil cannot be incorporated into DNA. This is Deoxyuridine 5'-triphosphate nucleotidohydrolase from Rhodococcus erythropolis (strain PR4 / NBRC 100887).